The primary structure comprises 119 residues: Large ribosomal subunit protein bL20 (119 aa).

It belongs to the bacterial ribosomal protein bL20 family.

In terms of biological role, binds directly to 23S ribosomal RNA and is necessary for the in vitro assembly process of the 50S ribosomal subunit. It is not involved in the protein synthesizing functions of that subunit. The polypeptide is Large ribosomal subunit protein bL20 (Neisseria gonorrhoeae (strain ATCC 700825 / FA 1090)).